Reading from the N-terminus, the 235-residue chain is 2-C-methyl-D-erythritol 4-phosphate cytidylyltransferase (235 aa).

This sequence belongs to the IspD/TarI cytidylyltransferase family. IspD subfamily.

The catalysed reaction is 2-C-methyl-D-erythritol 4-phosphate + CTP + H(+) = 4-CDP-2-C-methyl-D-erythritol + diphosphate. It functions in the pathway isoprenoid biosynthesis; isopentenyl diphosphate biosynthesis via DXP pathway; isopentenyl diphosphate from 1-deoxy-D-xylulose 5-phosphate: step 2/6. In terms of biological role, catalyzes the formation of 4-diphosphocytidyl-2-C-methyl-D-erythritol from CTP and 2-C-methyl-D-erythritol 4-phosphate (MEP). This is 2-C-methyl-D-erythritol 4-phosphate cytidylyltransferase from Pseudomonas putida (strain W619).